Reading from the N-terminus, the 278-residue chain is tRNA pseudouridine synthase A (278 aa).

D52 serves as the catalytic Nucleophile. Y110 is a substrate binding site. A disordered region spans residues 259-278 (SKRQNGTTKVEQPSSYVHEE). Positions 261–278 (RQNGTTKVEQPSSYVHEE) are enriched in polar residues.

The protein belongs to the tRNA pseudouridine synthase TruA family. Homodimer.

The enzyme catalyses uridine(38/39/40) in tRNA = pseudouridine(38/39/40) in tRNA. In terms of biological role, formation of pseudouridine at positions 38, 39 and 40 in the anticodon stem and loop of transfer RNAs. The protein is tRNA pseudouridine synthase A of Chloroflexus aurantiacus (strain ATCC 29366 / DSM 635 / J-10-fl).